Consider the following 1421-residue polypeptide: MVSFFKTPIIIFFFLLCLNEKVLCSINENENLGENKNENANVNTPENLNKLLNEYDNIEQLKSMIGNDELHKNLTILEKLILESLEKDKLKYPLLKQGTEQLIDISKFNKKNITDADDETYIIPTVQSSFHDIVKYEHLIKEQSIEIYNSDISDKIKKKIFIVRTLKTIKLMLIPLNSYKQNNDLKSALEELNNVFTNKEAQKESSPIGDHGTFFRKLLTHVRTIKENEDIENKGETLILGDNKIDVMNSNDFFFTTNSNVKFMENLDDITNEYGLGLINHLGPHLIALGHFVVLKLALKNYKNYFEAKNIKFFSWQKILEFSMSDRFKVLDMMCNHESVYYSEKKRRKTYLKVDRSSTSMECNILEYLLHYFNKYQLEIIKTTQDTDFDLHGMMEHKYIKDYFFSFMCNDPKECIIYHTNQFKKEANEENTFPEQEEPNRQISAFNLYLNYYYFMKRYSSYGTKKTLYVHLLNLTGLLNHDTRAYVTSLYLPGYYNAVEMSFTDDKEFSTLFESLIQCIEKCHSDQARQISKDSNLLNNITKCDLCKGAFLYANMKFDEVPSMLQKFYVYLTKGLKIQKVSSLIKTLDIYQDYSNFLSHDINWYTFLFLFRLTSFKEIANKNVAEAMYLNIKDEDTFNKTIVTNYWYPSPIKKYYTLYVRKHIPNNLVDELEKLMKSGTLEKMKKSLTFLVHVNSFLQLDFFHQLNEPPLGLPRSYPLSLVLEHKFKEWMDSSPAGFYFSNYQNPYIRKDLHDKVLSQKFEPPKMNQWNKVLKSLIECAYDMYFEQRHVKNLYKYHNIYNINNKLMLMRDSIDLYKNNFDDVLFFADIFNMRKYMTATPVYKKVKDRVYHTLHSITGNSVNFYKYGIIYGFKVNKEILKEVVDELYSIYNFNTDIFTDTSFLQTVYLLFRRIEETYRTQRRDDKISVNNVFFMNVANNYSKLNKEEREIEIHNSMASRYYAKTMFAAFQMLFSTMLSNNVDNLDKAYGLSENIQVATSTSAFLTFAYVYNGSIMDSVTNSLLPPYAKKPITQLKYGKTFVFSNYFMLASKMYDMLNYKNLSLLCEYQAVASANFYSAKKVGQFLGRKFLPITTYFLVMRISWTHAFTTGSHLITYFDPPNTNPSTLPNCASGKNKSPESFFFTHALAAEASKYLFFYFFTNLYLDAYKSFPGGFGPAIKEQTQHVQEQTYERKPSVHSFNRNFFMELANGFMYAFCFFAISQMYAYFENINFYITSNFRFLDRYYGVFNKYFINYAIIKLKEITSDLLIKYEREAYLNMKKYGYLGEVIAARLSPKDKIMNYLHETNDDVMSNLRRYDMENAFKNKMVTYVDDFAFFDDCGKNEQFLNERCDYCPVIEEVEETELFTTTGDKNTNETTEIKKQTSTYIDTEKMNEADSADSDDEKDFDTPDNELMIARFH.

The N-terminal stretch at 1 to 24 (MVSFFKTPIIIFFFLLCLNEKVLC) is a signal peptide. 4 cysteine pairs are disulfide-bonded: Cys-335–Cys-363, Cys-409–Cys-415, Cys-519–Cys-547, and Cys-523–Cys-544. A helical transmembrane segment spans residues 1203–1223 (NFFMELANGFMYAFCFFAISQ). Cys-1352 and Cys-1355 form a disulfide bridge. Residues 1371-1413 (GDKNTNETTEIKKQTSTYIDTEKMNEADSADSDDEKDFDTPDN) form a disordered region. A compositionally biased stretch (acidic residues) spans 1398-1412 (DSADSDDEKDFDTPD).

As to quaternary structure, component of the RhopH complex. RhopH complex is at least composed of CLAG3.1/CLAG3.2, RhopH2 and RhopH3 with a 1:1:1 subunit stoichiometry. CLAG3.1/CLAG3.2 mediates subunit association through independent contacts with RhopH2 and RhopH3, which do not directly interact with one another. Interacts with RhopH2. Interacts with RhopH3.

The protein localises to the host cell membrane. It localises to the parasitophorous vacuole membrane. The protein resides in the host cytoplasm. It is found in the cytoplasmic vesicle. Its subcellular location is the secretory vesicle. The protein localises to the rhoptry. In terms of biological role, participates in the formation of new permeability pathways in Plasmodium-infected erythrocytes enabling the uptake of nutrients from the blood plasma. The polypeptide is Cytoadherence-linked asexual protein 3.2 (Plasmodium falciparum).